A 1334-amino-acid chain; its full sequence is Nck-associated protein 5-like (1334 aa).

5 disordered regions span residues 1-28, 115-146, 210-234, 266-316, and 349-711; these read MSEAMDQPAGGPGNPRPGEGDDGSMEPG, LPQIPLTPLQPPSEPPASPSLSSTEGPAAPLP, TPWRPPGQGPGSPEPINGELCGPPQ, GEED…SPDT, and PLNG…MVPS. The tract at residues 1–139 is mediates interaction with CDK5RAP2 and is required for homodimerization and microtubule bundle formation; that stretch reads MSEAMDQPAG…PASPSLSSTE (139 aa). Residues 28-106 are a coiled coil; the sequence is GTCQELLHRL…NQMLSALFQQ (79 aa). Positions 122 to 132 are enriched in pro residues; it reads PLQPPSEPPAS. Over residues 358–372 the composition is skewed to polar residues; the sequence is GQSSSPDQAPPQLSK. Residues Ser440, Ser451, Ser470, and Ser477 each carry the phosphoserine; by CDK1 modification. A compositionally biased stretch (low complexity) spans 468–481; it reads SPSPGGPQLSPQLP. Positions 484–487 match the (S/T)X(I/L)P motif 1 motif; it reads SRIP. A phosphoserine mark is found at Ser493, Ser496, and Ser498. Residues 519-547 show a composition bias toward polar residues; sequence LPTSPSPCYTTPDSTQLRPPQSALSTTLS. Ser571 and Ser577 each carry phosphoserine; by CDK1. Residues 638-649 show a composition bias toward polar residues; it reads PGNSSKKPSQGS. At Thr659 the chain carries Phosphothreonine. The mediates interaction with beta-tubulin and is required for microtubule bundle formation stretch occupies residues 750-1146; it reads RVYSSHSMGA…SGTPSKNLPK (397 aa). Phosphoserine; by CDK1 is present on Ser767. The interval 782–884 is disordered; sequence LAGALCPQVP…EGLAPHSAIE (103 aa). The span at 810-825 shows a compositional bias: low complexity; that stretch reads SPHSSPTKLPSKSPTK. The (S/T)X(I/L)P motif 2 motif lies at 816–819; sequence TKLP. The (S/T)X(I/L)P motif 3; required for interaction with MAPRE1 motif lies at 926–929; that stretch reads SKLP. Disordered regions lie at residues 931–953, 986–1015, and 1030–1183; these read LNRRTEATKNKEGAGGGSPLRRE, KAYLSSRARPRPGGPAPGPNTGLGQVQGQL, and LNRV…VPGI. A compositionally biased stretch (basic and acidic residues) spans 933-942; it reads RRTEATKNKE. The stretch at 956-994 forms a coiled coil; the sequence is MEARKLEAESLNISKLMAKAEDLRRALEEEKAYLSSRAR. Positions 1033–1050 are enriched in basic and acidic residues; that stretch reads VDGKELPSKSWREPKPEY. Low complexity predominate over residues 1079–1090; the sequence is GCGKPPGKPSSE. The segment covering 1110 to 1122 has biased composition (polar residues); that stretch reads SHFTACGSLTRTL. A compositionally biased stretch (pro residues) spans 1152-1167; sequence LDPPPGVPPARPPPLT. Residue Ser1194 is modified to Phosphoserine. Over residues 1197–1206 the composition is skewed to low complexity; sequence AFPALLPAAP. Residues 1197–1334 are disordered; that stretch reads AFPALLPAAP…DSLSSCGSQG (138 aa). The segment covering 1235–1247 has biased composition (polar residues); it reads TFPNTRAAGSSSD. Low complexity predominate over residues 1313–1334; that stretch reads LETSESLSDSLYDSLSSCGSQG.

As to quaternary structure, homodimer. Interacts with CDK5RAP2. Interacts with MAPRE1. Interacts with beta-tubulin. CDK1/Cyclin B-dependent phosphorylation mediates its dissociation from centrosomes during mitosis.

Its subcellular location is the cytoplasm. It localises to the cytoskeleton. It is found in the microtubule organizing center. The protein resides in the centrosome. Functionally, regulates microtubule organization and stabilization. Promotes microtubule growth and bundling formation and stabilizes microtubules by increasing intense acetylation of microtubules. Both tubulin-binding and homodimer formation are required for NCKAP5L-mediated microtubule bundle formation. The sequence is that of Nck-associated protein 5-like from Homo sapiens (Human).